The primary structure comprises 319 residues: Cytochrome f (319 aa).

A signal peptide spans 1–35 (MQKKDVCEYITKWVSVTISTLVTIGVLVFPLSSEA). Heme contacts are provided by Tyr36, Cys56, Cys59, and His60. A helical membrane pass occupies residues 285–305 (IQGLLVFFASVVLAQIFLVLK).

This sequence belongs to the cytochrome f family. In terms of assembly, the 4 large subunits of the cytochrome b6-f complex are cytochrome b6, subunit IV (17 kDa polypeptide, petD), cytochrome f and the Rieske protein, while the 4 small subunits are PetG, PetL, PetM and PetN. The complex functions as a dimer. Heme is required as a cofactor.

It localises to the plastid. The protein resides in the chloroplast thylakoid membrane. Component of the cytochrome b6-f complex, which mediates electron transfer between photosystem II (PSII) and photosystem I (PSI), cyclic electron flow around PSI, and state transitions. This is Cytochrome f from Zygnema circumcarinatum (Green alga).